Here is a 254-residue protein sequence, read N- to C-terminus: Acetylglutamate kinase (254 aa).

Substrate is bound by residues 40 to 41, R62, and N158; that span reads GG.

The protein belongs to the acetylglutamate kinase family. ArgB subfamily.

Its subcellular location is the cytoplasm. It catalyses the reaction N-acetyl-L-glutamate + ATP = N-acetyl-L-glutamyl 5-phosphate + ADP. Its pathway is amino-acid biosynthesis; L-arginine biosynthesis; N(2)-acetyl-L-ornithine from L-glutamate: step 2/4. Its function is as follows. Catalyzes the ATP-dependent phosphorylation of N-acetyl-L-glutamate. The chain is Acetylglutamate kinase from Chloroflexus aurantiacus (strain ATCC 29366 / DSM 635 / J-10-fl).